The chain runs to 658 residues: MTPGVRVSTDPEQVTFEDVVVGFSQEEWGQLKPAQRTLYRDVMLDTFRLLVSVGHWLPKPNVISLLEQEAELWAVESRLPQGVYPDLETRPKVKLSVLKQGISEEISNSVILVERFLWDGLWYCRGEDTEGHWEWSCESLESLAVPVAFTPVKTPVLEQWQRNGFGENISLNPDLPHQPMTPERQSPHTWGTRGKREKPDLNVLQKTCVKEKPYKCQECGKAFSHSSALIEHHRTHTGERPYECHECLKGFRNSSALTKHQRIHTGEKPYKCTQCGRTFNQIAPLIQHQRTHTGEKPYECSECGKSFSFRSSFSQHERTHTGEKPYECSECGKAFRQSIHLTQHLRIHTGEKPYQCGECGKAFSHSSSLTKHQRIHTGEKPYECHECGKAFTQITPLIQHQRTHTGEKPYECGECGKAFSQSTLLTEHRRIHTGEKPYGCNECGKTFSHSSSLSQHERTHTGEKPYECSQCGKAFRQSTHLTQHQRIHTGEKPYECNDCGKAFSHSSSLTKHQRIHTGEKPYECNQCGRAFSQLAPLIQHQRIHTGEKPYECNQCGRAFSQSSLLIEHQRIHTKEKPYGCNECGKSFSHSSSLSQHERTHTGEKPYECHDCGKSFRQSTHLTQHRRIHTGEKPYACRDCGKAFTHSSSLTKHQRTHTG.

Residues Val-14–Pro-85 enclose the KRAB domain. The interval Leu-171 to Arg-196 is disordered. C2H2-type zinc fingers lie at residues Tyr-214–His-236, Tyr-242–His-264, Tyr-270–His-292, Tyr-298–His-320, Tyr-326–His-348, Tyr-354–His-376, Tyr-382–His-404, Tyr-410–His-432, Tyr-438–His-460, Tyr-466–His-488, Tyr-494–His-516, Tyr-522–His-544, Tyr-550–His-572, Tyr-578–His-600, Tyr-606–His-628, and Tyr-634–His-656.

The protein belongs to the krueppel C2H2-type zinc-finger protein family.

The protein localises to the nucleus. Functionally, plays a role in the regulation of cell morphology and cytoskeletal organization. May be involved in transcriptional regulation. The sequence is that of Zinc finger protein 135 (ZNF135) from Homo sapiens (Human).